The sequence spans 149 residues: Ribosome maturation factor RimP (149 aa).

Belongs to the RimP family.

It localises to the cytoplasm. Its function is as follows. Required for maturation of 30S ribosomal subunits. The chain is Ribosome maturation factor RimP from Sulfurimonas denitrificans (strain ATCC 33889 / DSM 1251) (Thiomicrospira denitrificans (strain ATCC 33889 / DSM 1251)).